Reading from the N-terminus, the 192-residue chain is Large ribosomal subunit protein bL25 (192 aa).

Belongs to the bacterial ribosomal protein bL25 family. CTC subfamily. As to quaternary structure, part of the 50S ribosomal subunit; part of the 5S rRNA/L5/L18/L25 subcomplex. Contacts the 5S rRNA. Binds to the 5S rRNA independently of L5 and L18.

Its function is as follows. This is one of the proteins that binds to the 5S RNA in the ribosome where it forms part of the central protuberance. The polypeptide is Large ribosomal subunit protein bL25 (Solidesulfovibrio magneticus (strain ATCC 700980 / DSM 13731 / RS-1) (Desulfovibrio magneticus)).